Consider the following 211-residue polypeptide: Superoxide dismutase [Mn], mitochondrial (211 aa).

The transit peptide at 1 to 24 directs the protein to the mitochondrion; it reads MLCRAVCSASRRLAPALGILGVRQ. Mn(2+) is bound at residue His-50. Position 58 is a 3'-nitrotyrosine (Tyr-58). Lys-68 and Lys-75 each carry N6-acetyllysine; alternate. 2 positions are modified to N6-succinyllysine; alternate: Lys-68 and Lys-75. His-98 contacts Mn(2+). Lys-114 is subject to N6-acetyllysine. An N6-acetyllysine; alternate mark is found at Lys-122 and Lys-130. Lys-122 and Lys-130 each carry N6-succinyllysine; alternate. Residues Asp-183 and His-187 each coordinate Mn(2+). Lys-202 carries the post-translational modification N6-acetyllysine.

The protein belongs to the iron/manganese superoxide dismutase family. Homotetramer. Requires Mn(2+) as cofactor. Nitrated under oxidative stress. Nitration coupled with oxidation inhibits the catalytic activity. Post-translationally, acetylation at Lys-122 decreases enzymatic activity. Deacetylated by SIRT3 upon exposure to ionizing radiations or after long fasting. In terms of processing, polyubiquitinated; leading to proteasomal degradation. Deubiquitinated by USP36 which increases protein stability.

Its subcellular location is the mitochondrion matrix. It catalyses the reaction 2 superoxide + 2 H(+) = H2O2 + O2. In terms of biological role, destroys superoxide anion radicals which are normally produced within the cells and which are toxic to biological systems. This Cavia porcellus (Guinea pig) protein is Superoxide dismutase [Mn], mitochondrial (SOD2).